The primary structure comprises 132 residues: Amicyanin (132 aa).

An N-terminal signal peptide occupies residues 1–26; sequence MISAKTLRPAIAAIALFAIGATGAWA. Gln27 is subject to Pyrrolidone carboxylic acid. The 106-residue stretch at 27–132 folds into the Plastocyanin-like domain; it reads QDKITVTSEK…PFMRGKVIVE (106 aa). Residues His80, Cys119, His122, and Met125 each coordinate Cu cation.

It depends on Cu cation as a cofactor.

The protein localises to the periplasm. It functions in the pathway one-carbon metabolism; methylamine degradation. Primary acceptor of electrons from methylamine dehydrogenase. Passes those electrons on either a soluble cytochrome c or to pseudoazurin. The polypeptide is Amicyanin (mauC) (Paracoccus versutus (Thiobacillus versutus)).